Here is a 373-residue protein sequence, read N- to C-terminus: Flagellar P-ring protein (373 aa).

The N-terminal stretch at 1–26 is a signal peptide; that stretch reads MKLFFRIVTLVAVVAMSLADMAPAWA.

The protein belongs to the FlgI family. As to quaternary structure, the basal body constitutes a major portion of the flagellar organelle and consists of four rings (L,P,S, and M) mounted on a central rod.

The protein resides in the periplasm. It localises to the bacterial flagellum basal body. Its function is as follows. Assembles around the rod to form the L-ring and probably protects the motor/basal body from shearing forces during rotation. This chain is Flagellar P-ring protein, found in Rhizobium etli (strain ATCC 51251 / DSM 11541 / JCM 21823 / NBRC 15573 / CFN 42).